Reading from the N-terminus, the 263-residue chain is Acetylglutamate kinase (263 aa).

Substrate-binding positions include 48–49 (GG), Arg-70, and Asn-162.

It belongs to the acetylglutamate kinase family. ArgB subfamily.

The protein localises to the cytoplasm. The catalysed reaction is N-acetyl-L-glutamate + ATP = N-acetyl-L-glutamyl 5-phosphate + ADP. Its pathway is amino-acid biosynthesis; L-arginine biosynthesis; N(2)-acetyl-L-ornithine from L-glutamate: step 2/4. Functionally, catalyzes the ATP-dependent phosphorylation of N-acetyl-L-glutamate. In Shewanella sediminis (strain HAW-EB3), this protein is Acetylglutamate kinase.